A 278-amino-acid polypeptide reads, in one-letter code: 1-acyl-sn-glycerol-3-phosphate acyltransferase beta (278 aa).

The first 23 residues, 1–23 (MDPWPWLTAALLLLLLLVQLSRT), serve as a signal peptide directing secretion. Topologically, residues 24–29 (ARFYAK) are lumenal. Residues 30–50 (VGLYCVLCLSFSAAASIVCLL) traverse the membrane as a helical segment. Over 51-121 (RHGGRTVDNM…PKRCVQIAKR (71 aa)) the chain is Cytoplasmic. The short motif at 98-103 (HQSILD) is the HXXXXD motif element. The helical transmembrane segment at 122–142 (ELMFTGPVGLIMYLGGVYFIN) threads the bilayer. Topologically, residues 143–278 (RQQARTAMSV…IKEPGVLPAQ (136 aa)) are lumenal. Positions 172–175 (EGTR) match the EGTR motif motif.

It belongs to the 1-acyl-sn-glycerol-3-phosphate acyltransferase family. In terms of tissue distribution, expressed at high levels in the liver, at intermediate levels in the kidney, gut, heart and skeletal muscles. Undetectable in brain and spleen.

The protein resides in the endoplasmic reticulum membrane. It catalyses the reaction a 1-acyl-sn-glycero-3-phosphate + an acyl-CoA = a 1,2-diacyl-sn-glycero-3-phosphate + CoA. It carries out the reaction 1-(9Z-octadecenoyl)-sn-glycero-3-phosphate + (9Z)-octadecenoyl-CoA = 1,2-di-(9Z-octadecenoyl)-sn-glycero-3-phosphate + CoA. The catalysed reaction is 1-(9Z-octadecenoyl)-sn-glycero-3-phosphate + hexadecanoyl-CoA = 1-(9Z)-octadecenoyl-2-hexadecanoyl-sn-glycero-3-phosphate + CoA. The enzyme catalyses heptadecanoyl-CoA + 1-(9Z-octadecenoyl)-sn-glycero-3-phosphate = 1-(9Z)-octadecenoyl-2-heptadecanoyl-sn-glycero-3-phosphate + CoA. It catalyses the reaction 1-(9Z-octadecenoyl)-sn-glycero-3-phosphate + (9Z,12Z)-octadecadienoyl-CoA = 1-(9Z)-octadecenoyl-2-(9Z,12Z)-octadecadienoyl-sn-glycero-3-phosphate + CoA. It carries out the reaction 1-(9Z-octadecenoyl)-sn-glycero-3-phosphate + tetradecanoyl-CoA = 1-(9Z)-octadecenoyl-2-tetradecanoyl-sn-glycero-3-phosphate + CoA. The catalysed reaction is pentadecanoyl-CoA + 1-(9Z-octadecenoyl)-sn-glycero-3-phosphate = 1-(9Z)-octadecenoyl-2-pentadecanoyl-sn-glycero-3-phosphate + CoA. The enzyme catalyses 1-hexadecanoyl-sn-glycero-3-phosphate + (9Z)-octadecenoyl-CoA = 1-hexadecanoyl-2-(9Z-octadecenoyl)-sn-glycero-3-phosphate + CoA. It catalyses the reaction 1-tetradecanoyl-sn-glycerol 3-phosphate + (9Z)-octadecenoyl-CoA = 1-tetradecanoyl-2-(9Z)-octadecenoyl-sn-glycero-3-phosphate + CoA. It carries out the reaction 1-(9Z,12Z,15Z)-octadecatrienoyl-sn-glycero-3-phosphate + (9Z)-octadecenoyl-CoA = 1-(9Z,12Z,15Z)-octadecatrienoyl-2-(9Z)-octadecenoyl-sn-glycero-3-phosphate + CoA. The catalysed reaction is 1-(6Z,9Z,12Z-octadecatrienoyl)-sn-glycero-3-phosphate + (9Z)-octadecenoyl-CoA = (6Z,9Z,12Z)-octadecatrienoyl-2-(9Z)-octadecenoyl-sn-glycero-3-phosphate + CoA. The enzyme catalyses 1-eicosanoyl-sn-glycero-3-phosphate + (9Z)-octadecenoyl-CoA = 1-eicosanoyl-2-(9Z)-octadecenoyl-sn-glycero-3-phosphate + CoA. It catalyses the reaction 1-hexadecanoyl-sn-glycero-3-phosphate + octadecanoyl-CoA = 1-hexadecanoyl-2-octadecanoyl-sn-glycero-3-phosphate + CoA. It carries out the reaction 1-hexadecanoyl-sn-glycero-3-phosphate + (5Z,8Z,11Z,14Z)-eicosatetraenoyl-CoA = 1-hexadecanoyl-2-(5Z,8Z,11Z,14Z-eicosatetraenoyl)-sn-glycero-3-phosphate + CoA. The catalysed reaction is 1-hexadecanoyl-sn-glycero-3-phosphate + hexadecanoyl-CoA = 1,2-dihexadecanoyl-sn-glycero-3-phosphate + CoA. The enzyme catalyses 1-hexadecanoyl-sn-glycero-3-phosphate + tetradecanoyl-CoA = 1-hexadecanoyl-2-tetradecanoyl-sn-glycero-3-phosphate + CoA. It catalyses the reaction (11Z)-octadecenoyl-CoA + 1-(9Z-octadecenoyl)-sn-glycero-3-phosphate = 1-(9Z)-octadecenoyl-2-(11Z)-octadecenoyl-sn-glycero-3-phosphate + CoA. Its pathway is phospholipid metabolism; CDP-diacylglycerol biosynthesis; CDP-diacylglycerol from sn-glycerol 3-phosphate: step 2/3. Converts 1-acyl-sn-glycerol-3-phosphate (lysophosphatidic acid or LPA) into 1,2-diacyl-sn-glycerol-3-phosphate (phosphatidic acid or PA) by incorporating an acyl moiety at the sn-2 position of the glycerol backbone. The polypeptide is 1-acyl-sn-glycerol-3-phosphate acyltransferase beta (Agpat2) (Mus musculus (Mouse)).